Consider the following 214-residue polypeptide: Protein-L-isoaspartate O-methyltransferase (214 aa).

Residue Ser63 is part of the active site.

It belongs to the methyltransferase superfamily. L-isoaspartyl/D-aspartyl protein methyltransferase family.

Its subcellular location is the cytoplasm. It carries out the reaction [protein]-L-isoaspartate + S-adenosyl-L-methionine = [protein]-L-isoaspartate alpha-methyl ester + S-adenosyl-L-homocysteine. Catalyzes the methyl esterification of L-isoaspartyl residues in peptides and proteins that result from spontaneous decomposition of normal L-aspartyl and L-asparaginyl residues. It plays a role in the repair and/or degradation of damaged proteins. The protein is Protein-L-isoaspartate O-methyltransferase of Maridesulfovibrio salexigens (strain ATCC 14822 / DSM 2638 / NCIMB 8403 / VKM B-1763) (Desulfovibrio salexigens).